The chain runs to 62 residues: Zinc finger-containing protein P28b (62 aa).

The RING-type; degenerate zinc finger occupies 1–46 (MKLFTQNDRYFGLLDSCTHIFCITCINIWHKTRRETGASDNCPICR).

The polypeptide is Zinc finger-containing protein P28b (Vaccinia virus (strain Western Reserve) (VACV)).